The primary structure comprises 424 residues: Imidazolonepropionase (424 aa).

Residues His-84 and His-86 each coordinate Fe(3+). His-84 and His-86 together coordinate Zn(2+). Arg-93, Tyr-156, and His-189 together coordinate 4-imidazolone-5-propanoate. Tyr-156 provides a ligand contact to N-formimidoyl-L-glutamate. Fe(3+) is bound at residue His-254. His-254 is a Zn(2+) binding site. Glu-257 is a binding site for 4-imidazolone-5-propanoate. Position 328 (Asp-328) interacts with Fe(3+). Residue Asp-328 coordinates Zn(2+). N-formimidoyl-L-glutamate is bound by residues Asn-330 and Gly-332. Residue Ser-333 coordinates 4-imidazolone-5-propanoate.

It belongs to the metallo-dependent hydrolases superfamily. HutI family. It depends on Zn(2+) as a cofactor. The cofactor is Fe(3+).

The protein resides in the cytoplasm. It carries out the reaction 4-imidazolone-5-propanoate + H2O = N-formimidoyl-L-glutamate. It participates in amino-acid degradation; L-histidine degradation into L-glutamate; N-formimidoyl-L-glutamate from L-histidine: step 3/3. Functionally, catalyzes the hydrolytic cleavage of the carbon-nitrogen bond in imidazolone-5-propanoate to yield N-formimidoyl-L-glutamate. It is the third step in the universal histidine degradation pathway. This is Imidazolonepropionase from Geobacillus kaustophilus (strain HTA426).